The sequence spans 320 residues: Cytochrome f (320 aa).

Residues 1-35 (MQTINTFSWINQRITRSISVLLLVYIITRTSISSA) form the signal peptide. Residues Y36, C56, C59, and H60 each coordinate heme. Residues 286-306 (VQGLLFFLASVILAQIFLVLK) traverse the membrane as a helical segment.

Belongs to the cytochrome f family. In terms of assembly, the 4 large subunits of the cytochrome b6-f complex are cytochrome b6, subunit IV (17 kDa polypeptide, petD), cytochrome f and the Rieske protein, while the 4 small subunits are PetG, PetL, PetM and PetN. The complex functions as a dimer. Heme serves as cofactor.

The protein localises to the plastid thylakoid membrane. Component of the cytochrome b6-f complex, which mediates electron transfer between photosystem II (PSII) and photosystem I (PSI), cyclic electron flow around PSI, and state transitions. The sequence is that of Cytochrome f from Cuscuta exaltata (Tall dodder).